The primary structure comprises 210 residues: Pyridoxine/pyridoxamine 5'-phosphate oxidase (210 aa).

Substrate-binding positions include Arg-7–Tyr-10 and Lys-65. FMN-binding positions include Arg-60 to Lys-65, Phe-75 to Thr-76, Arg-81, Lys-82, and Gln-104. Substrate is bound by residues Tyr-122, Arg-126, and Ser-130. Residues Gln-139–Ser-140 and Trp-182 each bind FMN. Residue Arg-188–His-190 coordinates substrate. Residue Arg-192 participates in FMN binding.

Belongs to the pyridoxamine 5'-phosphate oxidase family. In terms of assembly, homodimer. It depends on FMN as a cofactor.

It carries out the reaction pyridoxamine 5'-phosphate + O2 + H2O = pyridoxal 5'-phosphate + H2O2 + NH4(+). The enzyme catalyses pyridoxine 5'-phosphate + O2 = pyridoxal 5'-phosphate + H2O2. It functions in the pathway cofactor metabolism; pyridoxal 5'-phosphate salvage; pyridoxal 5'-phosphate from pyridoxamine 5'-phosphate: step 1/1. Its pathway is cofactor metabolism; pyridoxal 5'-phosphate salvage; pyridoxal 5'-phosphate from pyridoxine 5'-phosphate: step 1/1. Its function is as follows. Catalyzes the oxidation of either pyridoxine 5'-phosphate (PNP) or pyridoxamine 5'-phosphate (PMP) into pyridoxal 5'-phosphate (PLP). This Bordetella bronchiseptica (strain ATCC BAA-588 / NCTC 13252 / RB50) (Alcaligenes bronchisepticus) protein is Pyridoxine/pyridoxamine 5'-phosphate oxidase.